The following is a 148-amino-acid chain: 3-hydroxyacyl-[acyl-carrier-protein] dehydratase FabZ (148 aa).

His-55 is an active-site residue.

This sequence belongs to the thioester dehydratase family. FabZ subfamily.

It is found in the cytoplasm. It catalyses the reaction a (3R)-hydroxyacyl-[ACP] = a (2E)-enoyl-[ACP] + H2O. Its function is as follows. Involved in unsaturated fatty acids biosynthesis. Catalyzes the dehydration of short chain beta-hydroxyacyl-ACPs and long chain saturated and unsaturated beta-hydroxyacyl-ACPs. In Haemophilus influenzae (strain ATCC 51907 / DSM 11121 / KW20 / Rd), this protein is 3-hydroxyacyl-[acyl-carrier-protein] dehydratase FabZ.